Here is a 267-residue protein sequence, read N- to C-terminus: uncharacterized protein (267 aa).

It belongs to the lin-8 family.

This is an uncharacterized protein from Caenorhabditis elegans.